Consider the following 342-residue polypeptide: Autoinducer 2 import system permease protein LsrC (342 aa).

Residues 1–13 lie on the Periplasmic side of the membrane; the sequence is MLKFIQNNREITA. The chain crosses the membrane as a helical span at residues 14-34; the sequence is LLAVVLLFVLPGFLDRQYLSV. The Cytoplasmic portion of the chain corresponds to 35-38; it reads QTLT. The helical transmembrane segment at 39–59 threads the bilayer; it reads MVYSSAQILILLAMGATLVML. Residues 60-69 lie on the Periplasmic side of the membrane; sequence TRNIDVSVGS. Residues 70–90 traverse the membrane as a helical segment; sequence ITGMCAVLLGMLLNAGYSLPV. At 91–92 the chain is on the cytoplasmic side; the sequence is AC. The helical transmembrane segment at 93–113 threads the bilayer; the sequence is VTTLLLGLLAGFFNGVLVAWL. A topological domain (periplasmic) is located at residue Lys114. A helical membrane pass occupies residues 115-135; sequence IPAIVATLGTLGLYRGIMLLW. Residues 136 to 154 lie on the Cytoplasmic side of the membrane; that stretch reads TGGKWIEGLPAELKQLSAP. Residues 155-175 traverse the membrane as a helical segment; sequence LLFGVSAIGWLTIILVAFMAW. The Periplasmic portion of the chain corresponds to 176-212; that stretch reads LLAKTAFGRSFYATGDNLQGARQLGVRTEAIRIVAFS. A helical transmembrane segment spans residues 213–233; that stretch reads LNGCMAALAGIVFASQIGFIP. Topologically, residues 234–251 are cytoplasmic; the sequence is NQTGTGLEMKAIAACVLG. A helical membrane pass occupies residues 252-272; that stretch reads GISLLGGSGAIIGAVLGAWFL. At 273 to 283 the chain is on the periplasmic side; the sequence is TQIDSVLVLLR. The helical transmembrane segment at 284 to 304 threads the bilayer; the sequence is IPAWWNDFIAGLVLLAVLVFD. At 305-342 the chain is on the cytoplasmic side; it reads GRLRCALERNLRRQKYARFMTPPPSVKPASSGKKREAA.

Belongs to the binding-protein-dependent transport system permease family. AraH/RbsC subfamily. In terms of assembly, the complex is composed of two ATP-binding proteins (LsrA), two transmembrane proteins (LsrC and LsrD) and a solute-binding protein (LsrB).

It localises to the cell inner membrane. In terms of biological role, part of the ABC transporter complex LsrABCD involved in autoinducer 2 (AI-2) import. Probably responsible for the translocation of the substrate across the membrane. In Escherichia coli O9:H4 (strain HS), this protein is Autoinducer 2 import system permease protein LsrC (lsrC).